Here is a 420-residue protein sequence, read N- to C-terminus: 3-phosphoshikimate 1-carboxyvinyltransferase (420 aa).

Residues Lys-20, Ser-21, and Arg-25 each coordinate 3-phosphoshikimate. Lys-20 is a binding site for phosphoenolpyruvate. Arg-119 provides a ligand contact to phosphoenolpyruvate. 3-phosphoshikimate-binding residues include Ser-161, Ser-162, Gln-163, Ser-189, Asp-303, Gln-326, and Lys-330. Gln-163 is a binding site for phosphoenolpyruvate. Asp-303 acts as the Proton acceptor in catalysis. Positions 334, 375, and 400 each coordinate phosphoenolpyruvate.

The protein belongs to the EPSP synthase family. As to quaternary structure, monomer.

The protein resides in the cytoplasm. It carries out the reaction 3-phosphoshikimate + phosphoenolpyruvate = 5-O-(1-carboxyvinyl)-3-phosphoshikimate + phosphate. It functions in the pathway metabolic intermediate biosynthesis; chorismate biosynthesis; chorismate from D-erythrose 4-phosphate and phosphoenolpyruvate: step 6/7. Functionally, catalyzes the transfer of the enolpyruvyl moiety of phosphoenolpyruvate (PEP) to the 5-hydroxyl of shikimate-3-phosphate (S3P) to produce enolpyruvyl shikimate-3-phosphate and inorganic phosphate. This Dehalococcoides mccartyi (strain ATCC BAA-2100 / JCM 16839 / KCTC 5957 / BAV1) protein is 3-phosphoshikimate 1-carboxyvinyltransferase.